Reading from the N-terminus, the 285-residue chain is 4-diphosphocytidyl-2-C-methyl-D-erythritol kinase (285 aa).

Lys11 is an active-site residue. Pro95–Ala105 contacts ATP. Asp137 is a catalytic residue.

It belongs to the GHMP kinase family. IspE subfamily.

It carries out the reaction 4-CDP-2-C-methyl-D-erythritol + ATP = 4-CDP-2-C-methyl-D-erythritol 2-phosphate + ADP + H(+). Its pathway is isoprenoid biosynthesis; isopentenyl diphosphate biosynthesis via DXP pathway; isopentenyl diphosphate from 1-deoxy-D-xylulose 5-phosphate: step 3/6. Functionally, catalyzes the phosphorylation of the position 2 hydroxy group of 4-diphosphocytidyl-2C-methyl-D-erythritol. This chain is 4-diphosphocytidyl-2-C-methyl-D-erythritol kinase, found in Paramagnetospirillum magneticum (strain ATCC 700264 / AMB-1) (Magnetospirillum magneticum).